We begin with the raw amino-acid sequence, 446 residues long: Tubulin beta chain (446 aa).

Glutamine 11, glutamate 69, serine 138, glycine 142, threonine 143, glycine 144, asparagine 204, and asparagine 226 together coordinate GTP. Mg(2+) is bound at residue glutamate 69. Residues 421 to 446 (EYQQYQDAGIDEEEEEYEEELPEGEE) form a disordered region. Positions 429-446 (GIDEEEEEYEEELPEGEE) are enriched in acidic residues.

It belongs to the tubulin family. As to quaternary structure, dimer of alpha and beta chains. A typical microtubule is a hollow water-filled tube with an outer diameter of 25 nm and an inner diameter of 15 nM. Alpha-beta heterodimers associate head-to-tail to form protofilaments running lengthwise along the microtubule wall with the beta-tubulin subunit facing the microtubule plus end conferring a structural polarity. Microtubules usually have 13 protofilaments but different protofilament numbers can be found in some organisms and specialized cells. Requires Mg(2+) as cofactor.

The protein localises to the cytoplasm. It localises to the cytoskeleton. In terms of biological role, tubulin is the major constituent of microtubules, a cylinder consisting of laterally associated linear protofilaments composed of alpha- and beta-tubulin heterodimers. Microtubules grow by the addition of GTP-tubulin dimers to the microtubule end, where a stabilizing cap forms. Below the cap, tubulin dimers are in GDP-bound state, owing to GTPase activity of alpha-tubulin. The protein is Tubulin beta chain (TUB2) of Fusarium fujikuroi (Bakanae and foot rot disease fungus).